The sequence spans 65 residues: Large ribosomal subunit protein bL35 (65 aa).

Residues 1 to 25 are disordered; that stretch reads MPKMKSHRGAAKRFKKTGTGKLKRA.

This sequence belongs to the bacterial ribosomal protein bL35 family.

This is Large ribosomal subunit protein bL35 from Clostridium botulinum (strain Eklund 17B / Type B).